Here is a 247-residue protein sequence, read N- to C-terminus: Hydroxyacylglutathione hydrolase 1 (247 aa).

Positions 54, 56, 58, 59, 111, 128, and 165 each coordinate Zn(2+).

The protein belongs to the metallo-beta-lactamase superfamily. Glyoxalase II family. As to quaternary structure, monomer. The cofactor is Zn(2+).

It carries out the reaction an S-(2-hydroxyacyl)glutathione + H2O = a 2-hydroxy carboxylate + glutathione + H(+). The protein operates within secondary metabolite metabolism; methylglyoxal degradation; (R)-lactate from methylglyoxal: step 2/2. Functionally, thiolesterase that catalyzes the hydrolysis of S-D-lactoyl-glutathione to form glutathione and D-lactic acid. This chain is Hydroxyacylglutathione hydrolase 1, found in Vibrio vulnificus (strain YJ016).